A 135-amino-acid polypeptide reads, in one-letter code: Large-conductance mechanosensitive channel (135 aa).

2 helical membrane passes run 9–29 (AFAA…GAAF) and 79–99 (IQTI…LKAI).

It belongs to the MscL family. In terms of assembly, homopentamer.

The protein localises to the cell inner membrane. Channel that opens in response to stretch forces in the membrane lipid bilayer. May participate in the regulation of osmotic pressure changes within the cell. This chain is Large-conductance mechanosensitive channel, found in Aeromonas salmonicida (strain A449).